A 967-amino-acid polypeptide reads, in one-letter code: Isoleucine--tRNA ligase (967 aa).

Positions 68 to 78 (PYANGTLHMGH) match the 'HIGH' region motif. An L-isoleucyl-5'-AMP-binding site is contributed by Glu-583. Positions 624–628 (KMSKS) match the 'KMSKS' region motif. Lys-627 serves as a coordination point for ATP. Zn(2+)-binding residues include Cys-937, Cys-940, Cys-957, and Cys-960.

This sequence belongs to the class-I aminoacyl-tRNA synthetase family. IleS type 1 subfamily. In terms of assembly, monomer. Requires Zn(2+) as cofactor.

It localises to the cytoplasm. The catalysed reaction is tRNA(Ile) + L-isoleucine + ATP = L-isoleucyl-tRNA(Ile) + AMP + diphosphate. In terms of biological role, catalyzes the attachment of isoleucine to tRNA(Ile). As IleRS can inadvertently accommodate and process structurally similar amino acids such as valine, to avoid such errors it has two additional distinct tRNA(Ile)-dependent editing activities. One activity is designated as 'pretransfer' editing and involves the hydrolysis of activated Val-AMP. The other activity is designated 'posttransfer' editing and involves deacylation of mischarged Val-tRNA(Ile). This is Isoleucine--tRNA ligase from Prochlorococcus marinus (strain NATL1A).